The primary structure comprises 197 residues: uncharacterized protein (197 aa).

A compositionally biased stretch (basic and acidic residues) spans 168–185; the sequence is QRDDFSEDSHANDPKLVG. The disordered stretch occupies residues 168–197; it reads QRDDFSEDSHANDPKLVGDDYVPQAPEQIN.

This is an uncharacterized protein from Escherichia coli (strain K12).